Here is a 395-residue protein sequence, read N- to C-terminus: ATP synthase subunit a (395 aa).

5 helical membrane passes run 153-173 (FTNP…LVYF), 246-266 (HFLI…IVGF), 273-293 (FLSF…LVLL), 313-333 (MMAG…MLCM), and 339-359 (FIGD…ELGV).

Belongs to the ATPase A chain family. In terms of assembly, F-type ATPases have 2 components, CF(1) - the catalytic core - and CF(0) - the membrane proton channel. CF(1) has five subunits: alpha(3), beta(3), gamma(1), delta(1), epsilon(1). CF(0) has three main subunits: a, b and c.

Its subcellular location is the mitochondrion inner membrane. Its function is as follows. Mitochondrial membrane ATP synthase (F(1)F(0) ATP synthase or Complex V) produces ATP from ADP in the presence of a proton gradient across the membrane which is generated by electron transport complexes of the respiratory chain. F-type ATPases consist of two structural domains, F(1) - containing the extramembraneous catalytic core and F(0) - containing the membrane proton channel, linked together by a central stalk and a peripheral stalk. During catalysis, ATP synthesis in the catalytic domain of F(1) is coupled via a rotary mechanism of the central stalk subunits to proton translocation. Key component of the proton channel; it may play a direct role in the translocation of protons across the membrane. This chain is ATP synthase subunit a (ATP6), found in Nicotiana tabacum (Common tobacco).